The primary structure comprises 415 residues: Serine hydroxymethyltransferase (415 aa).

Residues Leu-119 and 123–125 (GHL) contribute to the (6S)-5,6,7,8-tetrahydrofolate site. Lys-228 carries the N6-(pyridoxal phosphate)lysine modification. 353–355 (SAF) contacts (6S)-5,6,7,8-tetrahydrofolate.

This sequence belongs to the SHMT family. In terms of assembly, homodimer. Pyridoxal 5'-phosphate is required as a cofactor.

The protein resides in the cytoplasm. The catalysed reaction is (6R)-5,10-methylene-5,6,7,8-tetrahydrofolate + glycine + H2O = (6S)-5,6,7,8-tetrahydrofolate + L-serine. It participates in one-carbon metabolism; tetrahydrofolate interconversion. The protein operates within amino-acid biosynthesis; glycine biosynthesis; glycine from L-serine: step 1/1. Catalyzes the reversible interconversion of serine and glycine with tetrahydrofolate (THF) serving as the one-carbon carrier. Also exhibits THF-independent aldolase activity toward beta-hydroxyamino acids, producing glycine and aldehydes, via a retro-aldol mechanism. The polypeptide is Serine hydroxymethyltransferase (Halobacterium salinarum (strain ATCC 29341 / DSM 671 / R1)).